Here is a 216-residue protein sequence, read N- to C-terminus: MKIVLLGPPGAGKGTQAKSISNKYSIPHISTGDIFRKNISENTPLGIEAKGYIDNGQLVPDEVTINMVKDRLQQDDCKVGYLLDGFPRTVAQADALNNFLVDKNEQLDTALLIKVPNEFILERMTGRRVCPSCGASYHVKFNPPTNEGKCDLCGSEVIQRKDDTVETVKERLDVYQKETQPLIEFYGEKGLLSEVDGTKAINEVFRGICELLGNNK.

Residue 10-15 (GAGKGT) participates in ATP binding. The interval 30 to 59 (STGDIFRKNISENTPLGIEAKGYIDNGQLV) is NMP. AMP-binding positions include Thr31, Arg36, 57–59 (QLV), 85–88 (GFPR), and Gln92. The segment at 126-163 (GRRVCPSCGASYHVKFNPPTNEGKCDLCGSEVIQRKDD) is LID. ATP is bound at residue Arg127. Positions 130 and 133 each coordinate Zn(2+). 136-137 (SY) contributes to the ATP binding site. Residues Cys150 and Cys153 each contribute to the Zn(2+) site. AMP is bound by residues Arg160 and Arg171. Position 199 (Lys199) interacts with ATP.

The protein belongs to the adenylate kinase family. In terms of assembly, monomer.

Its subcellular location is the cytoplasm. The catalysed reaction is AMP + ATP = 2 ADP. The protein operates within purine metabolism; AMP biosynthesis via salvage pathway; AMP from ADP: step 1/1. Catalyzes the reversible transfer of the terminal phosphate group between ATP and AMP. Plays an important role in cellular energy homeostasis and in adenine nucleotide metabolism. The polypeptide is Adenylate kinase (Clostridium beijerinckii (strain ATCC 51743 / NCIMB 8052) (Clostridium acetobutylicum)).